Reading from the N-terminus, the 382-residue chain is Transcription factor MYB104 (382 aa).

HTH myb-type domains are found at residues 13 to 69 (KKTF…KPSL) and 70 to 120 (KKGP…MRLK). DNA-binding regions (H-T-H motif) lie at residues 41 to 65 (WTHV…MNHL) and 93 to 116 (WSQM…NARR). The disordered stretch occupies residues 326 to 364 (IPKTDTSSESQLFQSSLRSHTDATPDIANTTGYVGSNER). 2 stretches are compositionally biased toward polar residues: residues 329-343 (TDTS…SSLR) and 352-364 (IANT…SNER).

The protein resides in the nucleus. This chain is Transcription factor MYB104 (MYB104), found in Arabidopsis thaliana (Mouse-ear cress).